The chain runs to 194 residues: ATP-dependent Clp protease proteolytic subunit 1 (194 aa).

Ser-98 functions as the Nucleophile in the catalytic mechanism. His-123 is a catalytic residue.

Belongs to the peptidase S14 family. Fourteen ClpP subunits assemble into 2 heptameric rings which stack back to back to give a disk-like structure with a central cavity, resembling the structure of eukaryotic proteasomes.

The protein localises to the cytoplasm. The catalysed reaction is Hydrolysis of proteins to small peptides in the presence of ATP and magnesium. alpha-casein is the usual test substrate. In the absence of ATP, only oligopeptides shorter than five residues are hydrolyzed (such as succinyl-Leu-Tyr-|-NHMec, and Leu-Tyr-Leu-|-Tyr-Trp, in which cleavage of the -Tyr-|-Leu- and -Tyr-|-Trp bonds also occurs).. In terms of biological role, cleaves peptides in various proteins in a process that requires ATP hydrolysis. Has a chymotrypsin-like activity. Plays a major role in the degradation of misfolded proteins. ClpXP1 is involved in the complete degradation of the Site-2 clipped anti-sigma-W factor RsiW. This results in the release of SigW and the transcription activation of the genes under the control of the sigma-W factor. The chain is ATP-dependent Clp protease proteolytic subunit 1 from Halalkalibacterium halodurans (strain ATCC BAA-125 / DSM 18197 / FERM 7344 / JCM 9153 / C-125) (Bacillus halodurans).